Consider the following 488-residue polypeptide: Spermatogenesis-associated protein 6 (488 aa).

The signal sequence occupies residues 1–17; sequence MPKVKALQCALALEIRS. Residues 176–225 form a disordered region; it reads HGRLQCRTSRSQKKKSKSPERSKYCINTKNYEQPTISSKSHSPSPYTKRR. The span at 200-220 shows a compositional bias: polar residues; sequence CINTKNYEQPTISSKSHSPSP. A phosphoserine mark is found at Ser217 and Ser219. Lys248 is covalently cross-linked (Glycyl lysine isopeptide (Lys-Gly) (interchain with G-Cter in SUMO2)). A phosphoserine mark is found at Ser265, Ser274, Ser325, Ser343, Ser346, Ser354, Ser424, Ser465, and Ser487.

This sequence belongs to the SPATA6 family. As to quaternary structure, interacts with MYL6. Specifically expressed in developing spermatids and mature spermatozoa (at protein level). Isoform 1 is weakly expressed in testis, ovary, thymus and placenta. Isoform 2 and isoform 3 are testis-specific. Expression isw higher in spermatids than in spermatocytes and spermatogonia.

The protein resides in the secreted. It is found in the cell projection. The protein localises to the cilium. It localises to the flagellum. In terms of biological role, required for formation of the sperm connecting piece during spermiogenesis. Sperm connecting piece is essential for linking the developing flagellum to the head during late spermiogenesis. May be involved in myosin-based microfilament transport through interaction with myosin subunits. This chain is Spermatogenesis-associated protein 6, found in Mus musculus (Mouse).